Consider the following 264-residue polypeptide: Undecaprenyl-diphosphatase (264 aa).

The next 7 membrane-spanning stretches (helical) occupy residues 38–58 (RSDF…VLVF), 75–95 (REYV…GLVV), 106–126 (VSPV…VEAY), 136–156 (VTWT…VFPG), 181–201 (FVFL…FLEM), 217–237 (VAFL…MGYI), and 242–262 (FTAF…WLPS).

This sequence belongs to the UppP family.

The protein localises to the cell membrane. It carries out the reaction di-trans,octa-cis-undecaprenyl diphosphate + H2O = di-trans,octa-cis-undecaprenyl phosphate + phosphate + H(+). Functionally, catalyzes the dephosphorylation of undecaprenyl diphosphate (UPP). Confers resistance to bacitracin. In Stenotrophomonas maltophilia (strain K279a), this protein is Undecaprenyl-diphosphatase.